We begin with the raw amino-acid sequence, 181 residues long: Small ribosomal subunit protein uS4 (181 aa).

An S4 RNA-binding domain is found at 106-168; the sequence is RRLQTLVYRK…PTSRIVKAKV (63 aa).

This sequence belongs to the universal ribosomal protein uS4 family. Part of the 30S ribosomal subunit. Contacts protein S5. The interaction surface between S4 and S5 is involved in control of translational fidelity.

One of the primary rRNA binding proteins, it binds directly to 16S rRNA where it nucleates assembly of the body of the 30S subunit. Functionally, with S5 and S12 plays an important role in translational accuracy. This is Small ribosomal subunit protein uS4 from Caldivirga maquilingensis (strain ATCC 700844 / DSM 13496 / JCM 10307 / IC-167).